Consider the following 438-residue polypeptide: Adenosylhomocysteinase (438 aa).

Residues Thr-64, Asp-139, and Glu-164 each coordinate substrate. 165-167 contributes to the NAD(+) binding site; it reads TTT. The substrate site is built by Lys-194 and Asp-198. NAD(+) contacts are provided by residues Asn-199, 228 to 233, Glu-251, Asn-286, 307 to 309, and Asn-352; these read GYGDVG and IGH.

It belongs to the adenosylhomocysteinase family. It depends on NAD(+) as a cofactor.

The protein resides in the cytoplasm. The catalysed reaction is S-adenosyl-L-homocysteine + H2O = L-homocysteine + adenosine. It participates in amino-acid biosynthesis; L-homocysteine biosynthesis; L-homocysteine from S-adenosyl-L-homocysteine: step 1/1. Its function is as follows. May play a key role in the regulation of the intracellular concentration of adenosylhomocysteine. This chain is Adenosylhomocysteinase, found in Coxiella burnetii (strain RSA 493 / Nine Mile phase I).